We begin with the raw amino-acid sequence, 96 residues long: Small ribosomal subunit protein bS18 (96 aa).

Belongs to the bacterial ribosomal protein bS18 family. In terms of assembly, part of the 30S ribosomal subunit. Forms a tight heterodimer with protein bS6.

Functionally, binds as a heterodimer with protein bS6 to the central domain of the 16S rRNA, where it helps stabilize the platform of the 30S subunit. The sequence is that of Small ribosomal subunit protein bS18 from Borreliella burgdorferi (strain ATCC 35210 / DSM 4680 / CIP 102532 / B31) (Borrelia burgdorferi).